Consider the following 942-residue polypeptide: Zinc finger protein 865 (942 aa).

Residues 66–106 (FASTSTSKPKEFKVEAPPSSSLSPSKKPDIATTQQFNNQPP) are disordered. A compositionally biased stretch (polar residues) spans 96–106 (ATTQQFNNQPP). 20 C2H2-type zinc fingers span residues 172–194 (FPCTVCQKSFKQSSHLVQHMLVH), 200–222 (YECNTCGRTYNHISSLIRHRRCH), 282–304 (FTCTLCWKVFKKQSHLHQHQIIH), 310–332 (FSCSVCAKSFNRRESLKRHVKTH), 338–360 (VQCEVCGKSFRDTSYLLKHQATH), 367–389 (YKCELCGKSYAAPQSLLRHKQVH), 466–488 (FCCNVCGRGFGRRETLKRHERIH), 494–516 (HQCSVCGKRFRESFHLTKHHVVH), 522–544 (YKCELCGKVFGYPQSLTRHKQIH), 564–586 (FGCTDCGERFPDSFHLMNHKELH), 592–614 (YVCDTCGKCFGFIENLMWHKLVH), 678–700 (FSCSICGQSFKHFLGLVTHKYVH), 706–728 (LACNVCGQNFAGAYDLLLHRRTH), 734–756 (FTCSVCGKRFWEAALLMRHQRCH), 762–784 (YRCTICGRGFLHSWYLRQHKVVH), 790–812 (YKCALCNKRFAQSSSLAEHQRLH), 818–840 (QRCPTCGKTFRYRSNLLEHQRVH), 846–868 (YRCDQCGKSFFYISSILRHQRSH), 874–896 (LRCSCCLKLFKDPKYFSKHVQTH), and 902–924 (FKCGACGEAFSNTYGLKKHRHAH).

The protein belongs to the krueppel C2H2-type zinc-finger protein family.

Its subcellular location is the nucleus. May be involved in transcriptional regulation. The polypeptide is Zinc finger protein 865 (znf865) (Xenopus tropicalis (Western clawed frog)).